The chain runs to 274 residues: MLTVETRQAVNPDYAKTLDTEGLRRHFLANDMFRSGEIRLIYTHYDRFVMGGAVPNGAPLTLDKVEETKTPSFLDRREMGIVNIGETGTVSAGDETYTLNRGDVLYLGAGSRAVTFDGAGRFYITSCPAHRSLPAKLVSLADSKEVKLGATETSNKRTINQFIHPLVMESCQLVLGYTMLEDGSVWNTIPSHIHDRRMEAYLYFGMDEKSRVLHLMGEPQETRHLFISNEEGAISPPWSIHSGAGIGSYTFIWAMAGDNVDYTDMDFIQPGDLK.

The Zn(2+) site is built by histidine 192, histidine 194, glutamate 199, and histidine 241.

This sequence belongs to the KduI family. The cofactor is Zn(2+).

The catalysed reaction is 5-dehydro-4-deoxy-D-glucuronate = 3-deoxy-D-glycero-2,5-hexodiulosonate. Its pathway is glycan metabolism; pectin degradation; 2-dehydro-3-deoxy-D-gluconate from pectin: step 4/5. In terms of biological role, catalyzes the isomerization of 5-dehydro-4-deoxy-D-glucuronate to 3-deoxy-D-glycero-2,5-hexodiulosonate. The sequence is that of 4-deoxy-L-threo-5-hexosulose-uronate ketol-isomerase from Agrobacterium fabrum (strain C58 / ATCC 33970) (Agrobacterium tumefaciens (strain C58)).